The following is a 418-amino-acid chain: UDP-N-acetylglucosamine 1-carboxyvinyltransferase (418 aa).

Residue 23 to 24 participates in phosphoenolpyruvate binding; that stretch reads KN. Arg93 contacts UDP-N-acetyl-alpha-D-glucosamine. Catalysis depends on Asp117, which acts as the Proton donor. The UDP-N-acetyl-alpha-D-glucosamine site is built by Asp305 and Ile327.

The protein belongs to the EPSP synthase family. MurA subfamily.

The protein resides in the cytoplasm. The catalysed reaction is phosphoenolpyruvate + UDP-N-acetyl-alpha-D-glucosamine = UDP-N-acetyl-3-O-(1-carboxyvinyl)-alpha-D-glucosamine + phosphate. It functions in the pathway cell wall biogenesis; peptidoglycan biosynthesis. Cell wall formation. Adds enolpyruvyl to UDP-N-acetylglucosamine. The protein is UDP-N-acetylglucosamine 1-carboxyvinyltransferase of Corynebacterium jeikeium (strain K411).